Here is a 194-residue protein sequence, read N- to C-terminus: Peroxiredoxin 2 (194 aa).

Positions 2-160 (PQLQKPAPAF…TLRLVQAFQY (159 aa)) constitute a Thioredoxin domain. The active-site Cysteine sulfenic acid (-SOH) intermediate is Cys47. A Phosphothreonine modification is found at Thr193. Phosphoserine is present on Ser194.

The protein belongs to the peroxiredoxin family. AhpC/Prx1 subfamily. Homodimer; disulfide-linked, upon oxidation. 5 homodimers assemble to form a ring-like decamer. Also exists as a monomer. Post-translationally, the enzyme can be inactivated by further oxidation of the cysteine sulfenic acid (C(P)-SOH) to sulphinic acid (C(P)-SO2H) instead of its condensation to a disulfide bond. It can be reactivated by forming a transient disulfide bond with sulfiredoxin SRXN1, which reduces the cysteine sulfinic acid in an ATP- and Mg-dependent manner. In terms of processing, conjugated to URM1, a ubiquitin-like protein. In terms of tissue distribution, detected in the head and body (at protein level).

It localises to the cytoplasm. The enzyme catalyses a hydroperoxide + [thioredoxin]-dithiol = an alcohol + [thioredoxin]-disulfide + H2O. Thiol-specific peroxidase that catalyzes the reduction of hydrogen peroxide and organic hydroperoxides to water and alcohols, respectively. Plays a role in cell protection against oxidative stress by detoxifying peroxides and as sensor of hydrogen peroxide-mediated signaling events. Might participate in the signaling cascades of growth factors and tumor necrosis factor-alpha by regulating the intracellular concentrations of H(2)O(2). Reduces an intramolecular disulfide bond in GDPD5 that gates the ability to GDPD5 to drive postmitotic motor neuron differentiation. The polypeptide is Peroxiredoxin 2 (Drosophila melanogaster (Fruit fly)).